Reading from the N-terminus, the 427-residue chain is 3-phosphoshikimate 1-carboxyvinyltransferase (427 aa).

Residues Lys-20, Ser-21, and Arg-25 each coordinate 3-phosphoshikimate. Lys-20 contacts phosphoenolpyruvate. Phosphoenolpyruvate is bound by residues Gly-90 and Arg-118. Residues Ser-163, Ser-164, Gln-165, Ser-191, Asp-309, and Lys-336 each coordinate 3-phosphoshikimate. Gln-165 is a binding site for phosphoenolpyruvate. The active-site Proton acceptor is the Asp-309. Phosphoenolpyruvate-binding residues include Arg-340 and Arg-381.

It belongs to the EPSP synthase family. As to quaternary structure, monomer.

The protein localises to the cytoplasm. It catalyses the reaction 3-phosphoshikimate + phosphoenolpyruvate = 5-O-(1-carboxyvinyl)-3-phosphoshikimate + phosphate. It functions in the pathway metabolic intermediate biosynthesis; chorismate biosynthesis. In terms of biological role, catalyzes the transfer of the enolpyruvyl moiety of phosphoenolpyruvate (PEP) to the 5-hydroxyl of shikimate-3-phosphate (S3P) to produce enolpyruvyl shikimate-3-phosphate and inorganic phosphate. This Methanococcoides burtonii (strain DSM 6242 / NBRC 107633 / OCM 468 / ACE-M) protein is 3-phosphoshikimate 1-carboxyvinyltransferase.